The sequence spans 488 residues: (S)-canadine synthase CYP719A21 (488 aa).

The helical transmembrane segment at 6–26 threads the bilayer; the sequence is LWILTLISTILAVFAAVLIIF. Heme is bound at residue cysteine 432.

The protein belongs to the cytochrome P450 family. Requires heme as cofactor.

It localises to the membrane. The enzyme catalyses (S)-tetrahydrocolumbamine + reduced [NADPH--hemoprotein reductase] + O2 = (S)-canadine + oxidized [NADPH--hemoprotein reductase] + 2 H2O + H(+). Its pathway is alkaloid biosynthesis. Cytochrome P450 involved in the biosynthesis of the benzylisoquinoline alkaloid noscapine. Converts (S)-tetrahydrocolumbamine to (S)-canadine. This chain is (S)-canadine synthase CYP719A21, found in Papaver somniferum (Opium poppy).